Here is a 78-residue protein sequence, read N- to C-terminus: MKVAANSSKMLAEKLELMKGGRRRRRRSRRRRRRSRRRSRSPYRRRYRRRRRRRRRRSRRRRYRRRRSYSRRRYRRRR.

Residues 1–21 (MKVAANSSKMLAEKLELMKGG) are hydrophobic. A disordered region spans residues 1 to 78 (MKVAANSSKM…YSRRRYRRRR (78 aa)). Positions 20-78 (GGRRRRRRSRRRRRRSRRRSRSPYRRRYRRRRRRRRRRSRRRRYRRRRSYSRRRYRRRR) are enriched in basic residues.

Phosphorylation occurs at different degrees. The triphosphorylated form may be predominant in T1. SP1 appears to be phosphorylated in elongated spermatids, but dephosphorylated in mature sperm cells. As to expression, testis.

The protein resides in the nucleus. It is found in the chromosome. In terms of biological role, cuttlefish spermiogenesis is characterized by a double nuclear protein transition: histones -&gt; spermatid-specific proteins (T1/T2) -&gt; protamines (SP1/SP2). The protamines compact sperm DNA into a highly condensed, stable and inactive complex. This Sepia officinalis (Common cuttlefish) protein is Spermatid-specific protein T1.